A 102-amino-acid chain; its full sequence is Putative pterin-4-alpha-carbinolamine dehydratase (102 aa).

The protein belongs to the pterin-4-alpha-carbinolamine dehydratase family.

It carries out the reaction (4aS,6R)-4a-hydroxy-L-erythro-5,6,7,8-tetrahydrobiopterin = (6R)-L-erythro-6,7-dihydrobiopterin + H2O. This is Putative pterin-4-alpha-carbinolamine dehydratase from Burkholderia cenocepacia (strain HI2424).